The sequence spans 166 residues: Small ribosomal subunit protein uS5 (166 aa).

The S5 DRBM domain occupies 11-74 (LEDRVVAINR…EDAKKNLVEV (64 aa)).

It belongs to the universal ribosomal protein uS5 family. As to quaternary structure, part of the 30S ribosomal subunit. Contacts proteins S4 and S8.

In terms of biological role, with S4 and S12 plays an important role in translational accuracy. Functionally, located at the back of the 30S subunit body where it stabilizes the conformation of the head with respect to the body. This chain is Small ribosomal subunit protein uS5, found in Enterococcus faecalis (strain ATCC 700802 / V583).